A 571-amino-acid polypeptide reads, in one-letter code: PHD and RING finger domain-containing protein C126.07c (571 aa).

The segment at 18-79 adopts an RING-type 1; atypical zinc-finger fold; that stretch reads CIICLSNLPN…RVANTCPLCR (62 aa). A PHD-type zinc finger spans residues 122-170; it reads TCRCVICGRSDHAEVLLLCDGCDDAYHTYCLNMDAVPIEEFYCPNCVLL. The RING-type 2; degenerate zinc-finger motif lies at 125-168; it reads CVICGRSDHAEVLLLCDGCDDAYHTYCLNMDAVPIEEFYCPNCV. Polar residues predominate over residues 305–324; that stretch reads ATEATISNPRPSSGRFQQTP. The segment at 305–377 is disordered; it reads ATEATISNPR…VLGNNSSSKS (73 aa). Over residues 346-356 the composition is skewed to basic residues; sequence RRQKRPTRRHI. The segment covering 359–377 has biased composition (polar residues); that stretch reads SNKSSGSSTVLGNNSSSKS.

The protein resides in the cytoplasm. Its subcellular location is the nucleus. This chain is PHD and RING finger domain-containing protein C126.07c, found in Schizosaccharomyces pombe (strain 972 / ATCC 24843) (Fission yeast).